Reading from the N-terminus, the 80-residue chain is Phage shock protein G (80 aa).

Helical transmembrane passes span Leu-5–Ile-25 and Leu-41–Ile-61.

The protein localises to the cell inner membrane. Effector of the phage shock response. The chain is Phage shock protein G (pspG) from Escherichia coli (strain K12).